A 44-amino-acid chain; its full sequence is Diuretic hormone (44 aa).

Residue valine 44 is modified to Valine amide.

It is found in the secreted. Regulation of fluid secretion. Stimulates primary urine secretion by Malpighian tubules and causes a dose-dependent stimulation of cAMP levels in the tubules. May act as clearance peptide in that it may remove metabolic waste from the hemolymph. The sequence is that of Diuretic hormone from Stomoxys calcitrans (Stable fly).